The primary structure comprises 300 residues: CDAN1-interacting nuclease 1 (300 aa).

It localises to the nucleus. The protein localises to the cytoplasm. In terms of biological role, may play a role in erythroid cell differentiation. The sequence is that of CDAN1-interacting nuclease 1 (cdin1) from Danio rerio (Zebrafish).